The following is a 71-amino-acid chain: Protein Tlp homolog (71 aa).

The segment at 30–56 (ETLQNNSLSRDQRQAIMEKNKRREESI) is disordered. Positions 39–56 (RDQRQAIMEKNKRREESI) are enriched in basic and acidic residues.

This sequence belongs to the Tlp family.

In Desulforamulus reducens (strain ATCC BAA-1160 / DSM 100696 / MI-1) (Desulfotomaculum reducens), this protein is Protein Tlp homolog.